A 273-amino-acid polypeptide reads, in one-letter code: Imidazole glycerol phosphate synthase subunit HisF (273 aa).

Catalysis depends on residues D11 and D134.

Belongs to the HisA/HisF family. Heterodimer of HisH and HisF.

Its subcellular location is the cytoplasm. The enzyme catalyses 5-[(5-phospho-1-deoxy-D-ribulos-1-ylimino)methylamino]-1-(5-phospho-beta-D-ribosyl)imidazole-4-carboxamide + L-glutamine = D-erythro-1-(imidazol-4-yl)glycerol 3-phosphate + 5-amino-1-(5-phospho-beta-D-ribosyl)imidazole-4-carboxamide + L-glutamate + H(+). Its pathway is amino-acid biosynthesis; L-histidine biosynthesis; L-histidine from 5-phospho-alpha-D-ribose 1-diphosphate: step 5/9. In terms of biological role, IGPS catalyzes the conversion of PRFAR and glutamine to IGP, AICAR and glutamate. The HisF subunit catalyzes the cyclization activity that produces IGP and AICAR from PRFAR using the ammonia provided by the HisH subunit. The protein is Imidazole glycerol phosphate synthase subunit HisF of Methanosarcina mazei (strain ATCC BAA-159 / DSM 3647 / Goe1 / Go1 / JCM 11833 / OCM 88) (Methanosarcina frisia).